We begin with the raw amino-acid sequence, 435 residues long: MAIHSRSDALAYQSGFGNQFSSEALPGALPIGQNSPQKHPLGLYAEQFSGTAFTVARSEARRTWLYRIKPSAAHPRYQRMGRQIAGQEQGPINPNRLRWNAFDIPAEPVDFIDGLIPLASTSAADQADGVSVYVYAANTSMQRAFFSADGEWLIVPQQGRLRIITELGLLDIEPLEIAVLPRGMKFRVQLLDSSARGYICENHGCALRLPELGPIGSNGLANPRDFLTPVAWFEDNQQPVELVQKFLGELWSTHLEHSPFDVVGWHGNNVAYKYDLRRFNTIGTVSYDHPDPSIFTVLTSPGAAHGQANIDFVIFPPRWMVAENTFRPPWFHRNLMNEFMGLIDGAYDAKAEGFMPGGASLHNCMSAHGPDNVTAEKAIAAELKPHKIENTMAFMFETGKVLRPSRHALGCPQLQADYDACWNDMTRTFNKEPRR.

The Proton acceptor role is filled by H289. Fe cation-binding residues include H332 and E338. Homogentisate contacts are provided by Y347 and H368. A Fe cation-binding site is contributed by H368.

It belongs to the homogentisate dioxygenase family. Hexamer; dimer of trimers. Requires Fe cation as cofactor.

It carries out the reaction homogentisate + O2 = 4-maleylacetoacetate + H(+). Its pathway is amino-acid degradation; L-phenylalanine degradation; acetoacetate and fumarate from L-phenylalanine: step 4/6. Its function is as follows. Involved in the catabolism of homogentisate (2,5-dihydroxyphenylacetate or 2,5-OH-PhAc), a central intermediate in the degradation of phenylalanine and tyrosine. Catalyzes the oxidative ring cleavage of the aromatic ring of homogentisate to yield maleylacetoacetate. This chain is Homogentisate 1,2-dioxygenase, found in Pseudomonas savastanoi pv. phaseolicola (strain 1448A / Race 6) (Pseudomonas syringae pv. phaseolicola (strain 1448A / Race 6)).